An 884-amino-acid polypeptide reads, in one-letter code: Probable inorganic carbon transporter subunit DabA (884 aa).

Zn(2+)-binding residues include Cys-390, Asp-392, His-582, and Cys-597.

The protein belongs to the inorganic carbon transporter (TC 9.A.2) DabA family. Forms a complex with DabB. The cofactor is Zn(2+).

The protein resides in the cell membrane. Functionally, part of an energy-coupled inorganic carbon pump. In Staphylococcus saprophyticus subsp. saprophyticus (strain ATCC 15305 / DSM 20229 / NCIMB 8711 / NCTC 7292 / S-41), this protein is Probable inorganic carbon transporter subunit DabA.